Here is a 255-residue protein sequence, read N- to C-terminus: Folate receptor alpha (255 aa).

An N-terminal signal peptide occupies residues 1 to 24 (MAHLMTVQLLLLVMWMAECAQSRA). 8 disulfide bridges follow: Cys-35/Cys-63, Cys-55/Cys-103, Cys-64/Cys-107, Cys-87/Cys-173, Cys-94/Cys-144, Cys-133/Cys-207, Cys-137/Cys-187, and Cys-150/Cys-167. The N-linked (GlcNAc...) asparagine glycan is linked to Asn-67. Folate is bound by residues Asp-101, Tyr-105, 122 to 126 (WRKER), 155 to 160 (HKGWNW), and Ser-194. Asn-159 is a glycosylation site (N-linked (GlcNAc...) asparagine). N-linked (GlcNAc...) asparagine glycosylation occurs at Asn-199. Ser-232 carries GPI-anchor amidated serine lipidation. The propeptide at 233 to 255 (GAGFHGTWPLLCSLSLVLLWVIS) is removed in mature form.

The protein belongs to the folate receptor family. The secreted form is derived from the membrane-bound form either by cleavage of the GPI anchor, or/and by proteolysis catalyzed by a metalloprotease. Detected in kidney proximal tubules (at protein level).

Its subcellular location is the cell membrane. The protein localises to the apical cell membrane. It is found in the basolateral cell membrane. The protein resides in the secreted. It localises to the cytoplasmic vesicle. Its subcellular location is the clathrin-coated vesicle. The protein localises to the endosome. Binds to folate and reduced folic acid derivatives and mediates delivery of 5-methyltetrahydrofolate and folate analogs into the interior of cells. Has high affinity for folate and folic acid analogs at neutral pH. Exposure to slightly acidic pH after receptor endocytosis triggers a conformation change that strongly reduces its affinity for folates and mediates their release. Required for normal embryonic development and normal cell proliferation. Required for renal folate reabsorption. The polypeptide is Folate receptor alpha (Folr1) (Mus musculus (Mouse)).